The sequence spans 146 residues: ATP synthase epsilon chain (146 aa).

Residues 92–116 show a composition bias toward basic and acidic residues; sequence ISVDQARRDRDSLRKKLNEHERSEQ. Residues 92-120 are disordered; sequence ISVDQARRDRDSLRKKLNEHERSEQDPEV.

This sequence belongs to the ATPase epsilon chain family. As to quaternary structure, F-type ATPases have 2 components, CF(1) - the catalytic core - and CF(0) - the membrane proton channel. CF(1) has five subunits: alpha(3), beta(3), gamma(1), delta(1), epsilon(1). CF(0) has three main subunits: a, b and c.

It localises to the cell membrane. Functionally, produces ATP from ADP in the presence of a proton gradient across the membrane. The polypeptide is ATP synthase epsilon chain (Cutibacterium acnes (strain DSM 16379 / KPA171202) (Propionibacterium acnes)).